The chain runs to 112 residues: Integration host factor subunit alpha (112 aa).

It belongs to the bacterial histone-like protein family. In terms of assembly, heterodimer of an alpha and a beta chain.

Its function is as follows. This protein is one of the two subunits of integration host factor, a specific DNA-binding protein that functions in genetic recombination as well as in transcriptional and translational control. This Rhizobium rhizogenes (strain K84 / ATCC BAA-868) (Agrobacterium radiobacter) protein is Integration host factor subunit alpha.